Here is a 64-residue protein sequence, read N- to C-terminus: uncharacterized protein (64 aa).

The chain crosses the membrane as a helical span at residues 41–61; it reads VFLALKVLGIMVLFYLLDAII.

The protein resides in the membrane. This is an uncharacterized protein from Acheta domesticus (House cricket).